A 263-amino-acid chain; its full sequence is Glucosamine-6-phosphate deaminase (263 aa).

D72 acts as the Proton acceptor; for enolization step in catalysis. Catalysis depends on D141, which acts as the For ring-opening step. Residue H143 is the Proton acceptor; for ring-opening step of the active site. The active-site For ring-opening step is the E148.

This sequence belongs to the glucosamine/galactosamine-6-phosphate isomerase family. NagB subfamily.

It catalyses the reaction alpha-D-glucosamine 6-phosphate + H2O = beta-D-fructose 6-phosphate + NH4(+). It participates in amino-sugar metabolism; N-acetylneuraminate degradation; D-fructose 6-phosphate from N-acetylneuraminate: step 5/5. Allosterically activated by N-acetylglucosamine 6-phosphate (GlcNAc6P). Functionally, catalyzes the reversible isomerization-deamination of glucosamine 6-phosphate (GlcN6P) to form fructose 6-phosphate (Fru6P) and ammonium ion. This Porphyromonas gingivalis (strain ATCC BAA-308 / W83) protein is Glucosamine-6-phosphate deaminase.